Here is a 150-residue protein sequence, read N- to C-terminus: UPF0098 protein CPn_0877/CP_0992/CPj0877/CpB0906 (150 aa).

Belongs to the UPF0098 family.

In Chlamydia pneumoniae (Chlamydophila pneumoniae), this protein is UPF0098 protein CPn_0877/CP_0992/CPj0877/CpB0906.